The sequence spans 108 residues: UPF0145 protein Ava_0420 (108 aa).

The protein belongs to the UPF0145 family.

The sequence is that of UPF0145 protein Ava_0420 from Trichormus variabilis (strain ATCC 29413 / PCC 7937) (Anabaena variabilis).